The primary structure comprises 968 residues: Protein translocase subunit SecA (968 aa).

ATP contacts are provided by residues glutamine 86, 104-108 (GEGKT), and aspartate 494. Positions 835 to 968 (PAESAEESTD…RAAKAAKKRR (134 aa)) are disordered. Composition is skewed to low complexity over residues 883–892 (ARVATRPAAE) and 910–923 (SAPS…FSEG). Over residues 956 to 968 (ARRRAAKAAKKRR) the composition is skewed to basic residues.

This sequence belongs to the SecA family. In terms of assembly, monomer and homodimer. Part of the essential Sec protein translocation apparatus which comprises SecA, SecYEG and auxiliary proteins SecDF. Other proteins may also be involved.

It is found in the cell membrane. Its subcellular location is the cytoplasm. The catalysed reaction is ATP + H2O + cellular proteinSide 1 = ADP + phosphate + cellular proteinSide 2.. In terms of biological role, part of the Sec protein translocase complex. Interacts with the SecYEG preprotein conducting channel. Has a central role in coupling the hydrolysis of ATP to the transfer of proteins into and across the cell membrane, serving as an ATP-driven molecular motor driving the stepwise translocation of polypeptide chains across the membrane. The protein is Protein translocase subunit SecA of Beutenbergia cavernae (strain ATCC BAA-8 / DSM 12333 / CCUG 43141 / JCM 11478 / NBRC 16432 / NCIMB 13614 / HKI 0122).